We begin with the raw amino-acid sequence, 235 residues long: Dephospho-CoA kinase (235 aa).

The DPCK domain maps to 15–219 (NVGLTGSISC…KKERLQRKSA (205 aa)). An ATP-binding site is contributed by 23–28 (SCGKST).

It belongs to the CoaE family.

Its subcellular location is the cytoplasm. The catalysed reaction is 3'-dephospho-CoA + ATP = ADP + CoA + H(+). It functions in the pathway cofactor biosynthesis; coenzyme A biosynthesis; CoA from (R)-pantothenate: step 5/5. Its function is as follows. Catalyzes the phosphorylation of the 3'-hydroxyl group of dephosphocoenzyme A to form coenzyme A. This Syntrophus aciditrophicus (strain SB) protein is Dephospho-CoA kinase.